Here is a 210-residue protein sequence, read N- to C-terminus: uncharacterized protein (210 aa).

This is an uncharacterized protein from Treponema pallidum (strain Nichols).